Consider the following 706-residue polypeptide: uncharacterized protein (706 aa).

3 coiled-coil regions span residues 86 to 162 (TKNV…AKKI), 269 to 299 (DYLK…VNEL), and 337 to 427 (DDYI…QSDY).

This is an uncharacterized protein from Staphylococcus aureus (strain MRSA252).